Reading from the N-terminus, the 495-residue chain is Genome polyprotein (495 aa).

The Extracellular portion of the chain corresponds to 1–445 (MRCIGISNRD…LNQVFGTIYG (445 aa)). Intrachain disulfides connect Cys3–Cys30, Cys60–Cys121, Cys74–Cys105, and Cys92–Cys116. An N-linked (GlcNAc...) asparagine; by host glycan is attached at Asn67. Positions 98 to 111 (DRGWGNGCGLFGKG) are fusion peptide. Residue Asn153 is glycosylated (N-linked (GlcNAc...) asparagine; by host). Disulfide bonds link Cys185-Cys285 and Cys302-Cys333. Residues 446 to 466 (AAFSGVSWTMKILIGVIITCI) form a helical membrane-spanning segment. Residues 467-472 (GMNSRS) are Cytoplasmic-facing. Residues 473–493 (TSLSVSLVLVGVVTLYLGGMV) form a helical membrane-spanning segment. Residues 494–495 (HA) are Extracellular-facing.

As to quaternary structure, homodimer; in the endoplasmic reticulum and Golgi. Interacts with protein prM. Interacts with non-structural protein 1. N-glycosylated. In terms of processing, specific enzymatic cleavages in vivo yield mature proteins. Cleavages in the lumen of endoplasmic reticulum are performed by host signal peptidase, wereas cleavages in the cytoplasmic side are performed by serine protease NS3. Signal cleavage at the 2K-4B site requires a prior NS3 protease-mediated cleavage at the 4A-2K site.

Its subcellular location is the virion membrane. The protein resides in the host endoplasmic reticulum membrane. Functionally, binds to host cell surface receptor and mediates fusion between viral and cellular membranes. Envelope protein is synthesized in the endoplasmic reticulum in the form of heterodimer with protein prM. They play a role in virion budding in the ER, and the newly formed immature particle is covered with 60 spikes composed of heterodimer between precursor prM and envelope protein E. The virion is transported to the Golgi apparatus where the low pH causes dissociation of PrM-E heterodimers and formation of E homodimers. prM-E cleavage is inefficient, and many virions are only partially matured. These uncleaved prM would play a role in immune evasion. This Aedes aegypti (Yellowfever mosquito) protein is Genome polyprotein.